A 614-amino-acid polypeptide reads, in one-letter code: Two-component response regulator ORR33 (614 aa).

In terms of domain architecture, Response regulatory spans 14 to 139; the sequence is RVMIIDDDAK…VMARLWRVVA (126 aa). Residue aspartate 67 is modified to 4-aspartylphosphate. Residues 193 to 220 form a disordered region; that stretch reads RQLTINVVDDGNRGSGSGGGGGGGADAN. Over residues 205–217 the composition is skewed to gly residues; that stretch reads RGSGSGGGGGGGA.

Belongs to the ARR family. Type-B subfamily. In terms of processing, two-component system major event consists of a His-to-Asp phosphorelay between a sensor histidine kinase (HK) and a response regulator (RR). In plants, the His-to-Asp phosphorelay involves an additional intermediate named Histidine-containing phosphotransfer protein (HPt). This multistep phosphorelay consists of a His-Asp-His-Asp sequential transfer of a phosphate group between first a His and an Asp of the HK protein, followed by the transfer to a conserved His of the HPt protein and finally the transfer to an Asp in the receiver domain of the RR protein.

Its function is as follows. Functions as a response regulator involved in His-to-Asp phosphorelay signal transduction system. Phosphorylation of the Asp residue in the receiver domain activates the ability of the protein to promote the transcription of target genes. May directly activate some type-A response regulators in response to cytokinins. This is Two-component response regulator ORR33 from Oryza sativa subsp. indica (Rice).